Reading from the N-terminus, the 96-residue chain is Carboxysome shell protein CsoS1A (96 aa).

The BMC domain maps to 7–92 (ALGMIETRGL…PHKEVEPVLT (86 aa)).

Belongs to the bacterial microcompartments protein family. CsoS1 subfamily. As to quaternary structure, homohexamer with a small central pore. Forms a CsoS2-CsoS1-RuBisCO complex.

Its subcellular location is the carboxysome. In terms of biological role, one of shell proteins of the carboxysome, a polyhedral inclusion where RuBisCO (ribulose bisphosphate carboxylase, ccbL-ccbS) is sequestered. Assembles into hexamers which make sheets that form the facets of the polyhedral carboxysome. The shell probably limits the diffusion of CO(2) into and out of the carboxysome. This Hydrogenovibrio crunogenus (strain DSM 25203 / XCL-2) (Thiomicrospira crunogena) protein is Carboxysome shell protein CsoS1A.